A 960-amino-acid polypeptide reads, in one-letter code: CWF19-like protein 2 (960 aa).

Disordered regions lie at residues 1 to 222 (MAAY…AGVV), 261 to 552 (EFQK…ELIL), 624 to 648 (AWPVNAPSETLEPRGGRRKRKAIET), and 712 to 731 (AQKERAGRDEERQRNKAVQE). Positions 13–101 (SIKSRKESKR…KKAKKEKKDE (89 aa)) form a coiled coil. Positions 16-52 (SRKESKREERERVIQKAKEKFEKEERRKAERKARGED) are enriched in basic and acidic residues. The span at 73 to 96 (KTKKAKKEKKAKKSKKEKKKKAKK) shows a compositional bias: basic residues. Acidic residues predominate over residues 108–117 (SSEDSEDEWV). Positions 135-146 (EATPSSSSASNN) are enriched in low complexity. Residues 163 to 279 (SVADRRAQKE…EDAAYGERRD (117 aa)) adopt a coiled-coil conformation. Basic and acidic residues-rich tracts occupy residues 165–181 (ADRRAQKEAEKEAERQK), 261–372 (EFQK…DDLS), and 404–417 (KPVDDVEMSREAGF). Polar residues predominate over residues 507–518 (SAVQDSETPTLQ). The stretch at 540-605 (SESEEEEEEE…IKDQSKRASK (66 aa)) forms a coiled coil. Positions 541–552 (ESEEEEEEELIL) are enriched in acidic residues. A compositionally biased stretch (basic and acidic residues) spans 713-731 (QKERAGRDEERQRNKAVQE).

The protein belongs to the CWF19 family.

The polypeptide is CWF19-like protein 2 (cwf19l2) (Danio rerio (Zebrafish)).